Consider the following 292-residue polypeptide: uncharacterized protein (292 aa).

Residues 17–37 (SMDMFFFLFIFLLFIYPEMMM) form a helical membrane-spanning segment.

It to M.jannaschii MJ0137.

The protein localises to the membrane. This is an uncharacterized protein from Methanocaldococcus jannaschii (strain ATCC 43067 / DSM 2661 / JAL-1 / JCM 10045 / NBRC 100440) (Methanococcus jannaschii).